Reading from the N-terminus, the 501-residue chain is Vitamin D 25-hydroxylase (501 aa).

A250 is a substrate binding site. A heme-binding site is contributed by C448.

Belongs to the cytochrome P450 family. In terms of assembly, homodimer. The cofactor is heme. As to expression, highly expressed in the liver and testis.

Its subcellular location is the endoplasmic reticulum membrane. It localises to the microsome membrane. The enzyme catalyses calciol + reduced [NADPH--hemoprotein reductase] + O2 = calcidiol + oxidized [NADPH--hemoprotein reductase] + H2O + H(+). The catalysed reaction is vitamin D2 + reduced [NADPH--hemoprotein reductase] + O2 = 25-hydroxyvitamin D2 + oxidized [NADPH--hemoprotein reductase] + H2O + H(+). It carries out the reaction 1alpha-hydroxyvitamin D2 + reduced [NADPH--hemoprotein reductase] + O2 = 1alpha,25-dihydroxyvitamin D2 + oxidized [NADPH--hemoprotein reductase] + H2O + H(+). It catalyses the reaction alfacalcidol + reduced [NADPH--hemoprotein reductase] + O2 = calcitriol + oxidized [NADPH--hemoprotein reductase] + H2O + H(+). Its pathway is hormone biosynthesis; vitamin D biosynthesis. Its function is as follows. A cytochrome P450 monooxygenase involved in activation of vitamin D precursors. Catalyzes hydroxylation at C-25 of both forms of vitamin D, vitamin D(2) and D(3) (calciol). Can metabolize vitamin D analogs/prodrugs 1alpha-hydroxyvitamin D(2) (doxercalciferol) and 1alpha-hydroxyvitamin D(3) (alfacalcidol) forming 25-hydroxy derivatives. Mechanistically, uses molecular oxygen inserting one oxygen atom into a substrate, and reducing the second into a water molecule, with two electrons provided by NADPH via cytochrome P450 reductase (CPR; NADPH-ferrihemoprotein reductase). The chain is Vitamin D 25-hydroxylase (Cyp2r1) from Mus musculus (Mouse).